The sequence spans 253 residues: uncharacterized protein (253 aa).

NADP(+) is bound by residues I17, S36, D62, N89, Y158, K162, V191, and T193. Y158 (proton donor) is an active-site residue. The active-site Lowers pKa of active site Tyr is the K162.

It belongs to the short-chain dehydrogenases/reductases (SDR) family.

It is found in the cytoplasm. It localises to the nucleus. This is an uncharacterized protein from Schizosaccharomyces pombe (strain 972 / ATCC 24843) (Fission yeast).